The sequence spans 494 residues: NADH-quinone oxidoreductase subunit N 2 (494 aa).

14 helical membrane passes run Leu-14 to Leu-34, Ile-45 to Ala-65, Val-82 to Leu-102, Ile-116 to Thr-136, Leu-139 to Phe-159, Phe-174 to Val-194, Leu-214 to Phe-234, Phe-262 to Trp-282, Trp-289 to Leu-309, Leu-317 to Thr-337, Leu-344 to Ile-364, Ala-388 to Ala-408, Ala-422 to Tyr-442, and Ile-470 to Met-490.

This sequence belongs to the complex I subunit 2 family. As to quaternary structure, NDH-1 is composed of 14 different subunits. Subunits NuoA, H, J, K, L, M, N constitute the membrane sector of the complex.

The protein localises to the cell inner membrane. The enzyme catalyses a quinone + NADH + 5 H(+)(in) = a quinol + NAD(+) + 4 H(+)(out). NDH-1 shuttles electrons from NADH, via FMN and iron-sulfur (Fe-S) centers, to quinones in the respiratory chain. The immediate electron acceptor for the enzyme in this species is believed to be ubiquinone. Couples the redox reaction to proton translocation (for every two electrons transferred, four hydrogen ions are translocated across the cytoplasmic membrane), and thus conserves the redox energy in a proton gradient. The sequence is that of NADH-quinone oxidoreductase subunit N 2 from Acidobacterium capsulatum (strain ATCC 51196 / DSM 11244 / BCRC 80197 / JCM 7670 / NBRC 15755 / NCIMB 13165 / 161).